The following is a 138-amino-acid chain: Large ribosomal subunit protein uL16 (138 aa).

Over residues 1–16 the composition is skewed to basic residues; that stretch reads MLIPKRVKYRRQHRPT. A disordered region spans residues 1-23; the sequence is MLIPKRVKYRRQHRPTRSGVSKG.

It belongs to the universal ribosomal protein uL16 family. Part of the 50S ribosomal subunit.

In terms of biological role, binds 23S rRNA and is also seen to make contacts with the A and possibly P site tRNAs. This is Large ribosomal subunit protein uL16 from Corynebacterium aurimucosum (strain ATCC 700975 / DSM 44827 / CIP 107346 / CN-1) (Corynebacterium nigricans).